Reading from the N-terminus, the 467-residue chain is Retinoic acid receptor RXR-gamma (467 aa).

The modulating stretch occupies residues 1-142 (MYGNYPHFIK…TSPGSLAKHI (142 aa)). 2 consecutive NR C4-type zinc fingers follow at residues 143 to 163 (CAICGDRSSGKHYGVYSCEGC) and 179 to 203 (CRDNKDCLIDKRQRNRCQYCRYQKC). Residues 143 to 208 (CAICGDRSSG…RYQKCLAMGM (66 aa)) constitute a DNA-binding region (nuclear receptor). Positions 209–232 (KREAVQEERQGSRERSENEAESTS) are hinge. A compositionally biased stretch (basic and acidic residues) spans 214-226 (QEERQGSRERSEN). Residues 214–237 (QEERQGSRERSENEAESTSGGSED) form a disordered region. Residues 235–463 (SEDMPVERIL…TFLMEMLETP (229 aa)) form the NR LBD domain.

It belongs to the nuclear hormone receptor family. NR2 subfamily. As to quaternary structure, homodimer. Heterodimer; with a RAR molecule. Binds DNA preferentially as a RAR/RXR heterodimer. Isoform 1 is highly expressed inliver. Isoform 2 is abundantly expressed in eye and dorsal root ganglia.

Its subcellular location is the nucleus. Receptor for retinoic acid. Retinoic acid receptors bind as heterodimers to their target response elements in response to their ligands, all-trans or 9-cis retinoic acid, and regulate gene expression in various biological processes. The RAR/RXR heterodimers bind to the retinoic acid response elements (RARE) composed of tandem 5'-AGGTCA-3' sites known as DR1-DR5. The high affinity ligand for RXRs is 9-cis retinoic acid. The sequence is that of Retinoic acid receptor RXR-gamma (RXRG) from Gallus gallus (Chicken).